The chain runs to 138 residues: Ferredoxin-2 (138 aa).

One can recognise a 2Fe-2S ferredoxin-type domain in the interval 27-117 (ADANLQSTDF…DAKIVYNLKH (91 aa)). Cys62, Cys67, Cys70, and Cys100 together coordinate [2Fe-2S] cluster.

It belongs to the 2Fe2S plant-type ferredoxin family. Requires [2Fe-2S] cluster as cofactor.

Functionally, ferredoxins are iron-sulfur proteins that transfer electrons in a wide variety of metabolic reactions. The sequence is that of Ferredoxin-2 (fer2) from Haloarcula marismortui (strain ATCC 43049 / DSM 3752 / JCM 8966 / VKM B-1809) (Halobacterium marismortui).